The primary structure comprises 255 residues: MDELTKRVIPCLDIKGGRVVKGVQFVNLIDAGDPVSCAVAYEENKADELCFLDITASSDKRDILLHLVEEVANKLFIPFTVGGGIRTIEDVKAVLNKGADKVSINTSAFQNPKLLKDASEIYGSQCIVCAIDVKFHPERKRYEVYLNGGRAETGREALDWGKEAHEMGAGEILLTSMDKDGTKDGFDINLMKSFTSNLTIPIIASGGAGNPEHMAEVILRGGADAVLAASIFHFGEFSIQETKQTMKEMGIKVRL.

Catalysis depends on residues Asp13 and Asp132.

Belongs to the HisA/HisF family. In terms of assembly, heterodimer of HisH and HisF.

It localises to the cytoplasm. It carries out the reaction 5-[(5-phospho-1-deoxy-D-ribulos-1-ylimino)methylamino]-1-(5-phospho-beta-D-ribosyl)imidazole-4-carboxamide + L-glutamine = D-erythro-1-(imidazol-4-yl)glycerol 3-phosphate + 5-amino-1-(5-phospho-beta-D-ribosyl)imidazole-4-carboxamide + L-glutamate + H(+). It functions in the pathway amino-acid biosynthesis; L-histidine biosynthesis; L-histidine from 5-phospho-alpha-D-ribose 1-diphosphate: step 5/9. Its function is as follows. IGPS catalyzes the conversion of PRFAR and glutamine to IGP, AICAR and glutamate. The HisF subunit catalyzes the cyclization activity that produces IGP and AICAR from PRFAR using the ammonia provided by the HisH subunit. This Leptospira biflexa serovar Patoc (strain Patoc 1 / ATCC 23582 / Paris) protein is Imidazole glycerol phosphate synthase subunit HisF.